Here is a 277-residue protein sequence, read N- to C-terminus: Undecaprenyl-diphosphatase (277 aa).

A run of 6 helical transmembrane segments spans residues 88-108 (MGWLVILGSLPIIVLGLLFQD), 117-137 (MWIVATMLIVFGLILAVADAV), 157-179 (FAQAMALIPGVSRSGGTITAGLL), 191-211 (SFLLAIPAVFGSGLYQLYKVV), 227-247 (LATVIAFVVGYVIIGWFLKFV), and 255-275 (FVWYRIFLGLALYLLLGFGVI).

This sequence belongs to the UppP family.

It localises to the cell membrane. It catalyses the reaction di-trans,octa-cis-undecaprenyl diphosphate + H2O = di-trans,octa-cis-undecaprenyl phosphate + phosphate + H(+). Functionally, catalyzes the dephosphorylation of undecaprenyl diphosphate (UPP). Confers resistance to bacitracin. This chain is Undecaprenyl-diphosphatase, found in Pseudarthrobacter chlorophenolicus (strain ATCC 700700 / DSM 12829 / CIP 107037 / JCM 12360 / KCTC 9906 / NCIMB 13794 / A6) (Arthrobacter chlorophenolicus).